Reading from the N-terminus, the 612-residue chain is Probable cytosolic Fe-S cluster assembly factor SJAG_02895 (612 aa).

An ATP-binding site is contributed by 13-20; the sequence is GKGGVGKS. Cys-200 and Cys-203 together coordinate [4Fe-4S] cluster. 7 WD repeats span residues 287 to 326, 330 to 370, 375 to 414, 420 to 459, 464 to 503, 528 to 566, and 574 to 612; these read GHRGRIWSVAVHPTLPLVATASEDKSVRVFQAQTGELIHV, YHTR…WECV, GHENEVKCVAWSHDGVYLATCSRDKSVWIWEAMEDDEFDC, EHTQDVKVVAWHPKDDLLVSGSYDNTIRFWRDDGDDWVQT, SHTSTVWALNFSPDGRLLASGDGEGEVFIWEKLVSNEDAA, TFTEPVYTLGWKDDHTLCASGAEGTIGLFAYEDDVSTWH, and AHDVYEINTIAWTNDSRLLSGGDDGLCNVWKLSEADQTA.

In the N-terminal section; belongs to the Mrp/NBP35 ATP-binding proteins family. NUBP2/CFD1 subfamily. The protein in the C-terminal section; belongs to the WD repeat CIA1 family. Heterotetramer of 2 nbp35 and 2 SJAG_02895 chains. Requires [4Fe-4S] cluster as cofactor.

The protein resides in the cytoplasm. It is found in the nucleus. Fusion protein of two essential components of the cytosolic iron-sulfur (Fe/S) protein assembly (CIA) machinery. Required for maturation of extramitochondrial Fe-S proteins. May form a heterotetramer with nubp35, functioning as a Fe-S scaffold complex, mediating the de novo assembly of an Fe-S cluster and its transfer to target apoproteins. This chain is Probable cytosolic Fe-S cluster assembly factor SJAG_02895, found in Schizosaccharomyces japonicus (strain yFS275 / FY16936) (Fission yeast).